The chain runs to 557 residues: Potassium-transporting ATPase potassium-binding subunit (557 aa).

The next 12 helical transmembrane spans lie at 5–25 (GFLL…PLGS), 63–83 (LCAI…MLLG), 132–152 (GLTV…FAFI), 170–190 (LLRI…LFLI), 253–273 (FVQM…FGEV), 283–303 (LLWA…WAEV), 329–349 (VLVS…AVIA), 356–376 (ALGG…FGGV), 379–399 (GLYG…LMIG), 416–436 (LTAL…ALAM), 484–504 (LLAF…MAIA), and 526–546 (LFVG…FIPA).

The protein belongs to the KdpA family. The system is composed of three essential subunits: KdpA, KdpB and KdpC.

It localises to the cell inner membrane. Functionally, part of the high-affinity ATP-driven potassium transport (or Kdp) system, which catalyzes the hydrolysis of ATP coupled with the electrogenic transport of potassium into the cytoplasm. This subunit binds the periplasmic potassium ions and delivers the ions to the membrane domain of KdpB through an intramembrane tunnel. This Shigella boydii serotype 18 (strain CDC 3083-94 / BS512) protein is Potassium-transporting ATPase potassium-binding subunit.